Consider the following 123-residue polypeptide: UPF0102 protein CLK_1817 (123 aa).

Belongs to the UPF0102 family.

The polypeptide is UPF0102 protein CLK_1817 (Clostridium botulinum (strain Loch Maree / Type A3)).